A 264-amino-acid polypeptide reads, in one-letter code: Pimeloyl-[acyl-carrier protein] methyl ester esterase (264 aa).

In terms of domain architecture, AB hydrolase-1 spans 23 to 244; it reads LVMLHGWGVN…MLAKASHAPF (222 aa). Substrate contacts are provided by residues Trp29, 87-88, and 150-154; these read SL and FLAIQ. The Nucleophile role is filled by Ser87. Catalysis depends on residues Asp214 and His241. His241 is a substrate binding site.

It belongs to the AB hydrolase superfamily. Carboxylesterase BioH family. In terms of assembly, monomer.

It is found in the cytoplasm. It carries out the reaction 6-carboxyhexanoyl-[ACP] methyl ester + H2O = 6-carboxyhexanoyl-[ACP] + methanol + H(+). The protein operates within cofactor biosynthesis; biotin biosynthesis. Its function is as follows. The physiological role of BioH is to remove the methyl group introduced by BioC when the pimeloyl moiety is complete. It allows to synthesize pimeloyl-ACP via the fatty acid synthetic pathway through the hydrolysis of the ester bonds of pimeloyl-ACP esters. In Shewanella sp. (strain MR-7), this protein is Pimeloyl-[acyl-carrier protein] methyl ester esterase.